The sequence spans 314 residues: Mitochondrial 2-oxoglutarate/malate carrier protein (314 aa).

Alanine 2 carries the N-acetylalanine modification. Serine 6 carries the post-translational modification Phosphoserine. 3 Solcar repeats span residues 23-108, 117-208, and 217-306; these read VKFL…LFER, PGFL…SKQF, and DNIL…MNKA. A helical membrane pass occupies residues 24 to 42; sequence KFLFGGLAGMGATVFVQPL. Lysine 57 bears the N6-succinyllysine mark. Lysine 73 is modified (N6-acetyllysine). A helical membrane pass occupies residues 83–101; that stretch reads GLSAGLLRQATYTTTRLGI. Residue tyrosine 102 is modified to Phosphotyrosine. The next 3 membrane-spanning stretches (helical) occupy residues 119–140, 183–202, and 222–240; these read FLLK…GTPA, GCIP…LASY, and HFCA…SMPV. Lysine 256 is subject to N6-acetyllysine. Residues 281–300 traverse the membrane as a helical segment; the sequence is GFTPYYARLGPHTVLTFIFL.

This sequence belongs to the mitochondrial carrier (TC 2.A.29) family. Interacts with SMIM26.

It is found in the mitochondrion inner membrane. The enzyme catalyses (S)-malate(in) + 2-oxoglutarate(out) = (S)-malate(out) + 2-oxoglutarate(in). It catalyses the reaction malonate(in) + 2-oxoglutarate(out) = malonate(out) + 2-oxoglutarate(in). It carries out the reaction succinate(in) + 2-oxoglutarate(out) = succinate(out) + 2-oxoglutarate(in). The catalysed reaction is maleate(in) + 2-oxoglutarate(out) = maleate(out) + 2-oxoglutarate(in). The enzyme catalyses oxaloacetate(in) + 2-oxoglutarate(out) = oxaloacetate(out) + 2-oxoglutarate(in). Catalyzes the transport of 2-oxoglutarate (alpha-oxoglutarate) across the inner mitochondrial membrane in an electroneutral exchange for malate. Can also exchange 2-oxoglutarate for other dicarboxylic acids such as malonate, succinate, maleate and oxaloacetate, although with lower affinity. Contributes to several metabolic processes, including the malate-aspartate shuttle, the oxoglutarate/isocitrate shuttle, in gluconeogenesis from lactate, and in nitrogen metabolism. Maintains mitochondrial fusion and fission events, and the organization and morphology of cristae. Involved in the regulation of apoptosis. Helps protect from cytotoxic-induced apoptosis by modulating glutathione levels in mitochondria. The protein is Mitochondrial 2-oxoglutarate/malate carrier protein (Slc25a11) of Mus musculus (Mouse).